A 102-amino-acid polypeptide reads, in one-letter code: Large ribosomal subunit protein uL24 (102 aa).

This sequence belongs to the universal ribosomal protein uL24 family. In terms of assembly, part of the 50S ribosomal subunit.

Functionally, one of two assembly initiator proteins, it binds directly to the 5'-end of the 23S rRNA, where it nucleates assembly of the 50S subunit. In terms of biological role, one of the proteins that surrounds the polypeptide exit tunnel on the outside of the subunit. The sequence is that of Large ribosomal subunit protein uL24 from Paraburkholderia xenovorans (strain LB400).